Reading from the N-terminus, the 213-residue chain is Ribosomal RNA small subunit methyltransferase G (213 aa).

S-adenosyl-L-methionine-binding positions include Gly-75, Phe-80, 128-129 (IE), and Arg-144.

Belongs to the methyltransferase superfamily. RNA methyltransferase RsmG family.

The protein resides in the cytoplasm. It catalyses the reaction guanosine(527) in 16S rRNA + S-adenosyl-L-methionine = N(7)-methylguanosine(527) in 16S rRNA + S-adenosyl-L-homocysteine. Specifically methylates the N7 position of guanine in position 527 of 16S rRNA. In Brucella ovis (strain ATCC 25840 / 63/290 / NCTC 10512), this protein is Ribosomal RNA small subunit methyltransferase G.